The sequence spans 388 residues: Plasminogen-binding group A streptococcal M-like protein PAM (388 aa).

The first 29 residues, 1-29 (RKLKTGTASVAVALTVVGAGLASQTEVKA), serve as a signal peptide directing secretion. Residues 85–113 (VEKLTADAELQRLKNERHEEAELERLKSE) are able to bind plasminogen. An A-1 repeat occupies 91 to 103 (DAELQRLKNERHE). Residues 91–116 (DAELQRLKNERHEEAELERLKSERHD) form a 2 X approximate tandem repeats, type a region. 5 stretches are compositionally biased toward basic and acidic residues: residues 95-137 (QRLK…KQEH), 145-168 (INEK…EKQI), 176-189 (LRRD…AKKQ), 218-231 (LRRD…AKKQ), and 260-269 (LRRDLDASRE). 3 disordered regions span residues 95–189 (QRLK…AKKQ), 204–231 (VKEE…AKKQ), and 248–269 (EEKQ…ASRE). One copy of the A-2 repeat lies at 104–116 (EAELERLKSERHD). Residues 147–153 (EKEAEAK) form a B-1 repeat. Residues 147-161 (EKEAEAKEKEAEQKK) are 2 X tandem repeats, type b. One copy of the B-2 repeat lies at 154 to 159 (EKEAEQ). C repeat units lie at residues 160-194 (KKLK…EKDL), 202-236 (DKVK…EKGL), and 244-278 (DKVK…EKAL). D repeat units lie at residues 311–316 (AKLEAE), 317–322 (AKALKE), 325–330 (AKQAEE), and 332–337 (AKLRAE). Over residues 331 to 340 (LAKLRAEKAS) the composition is skewed to basic and acidic residues. A disordered region spans residues 331–388 (LAKLRAEKASDSQTPDAKPGNKAVPGKGQAPQAGTKPNQNKAPMKETKRQLPSTGETT). The LPXTG sorting signal signature appears at 381 to 385 (LPSTG). Residue T384 is modified to Pentaglycyl murein peptidoglycan amidated threonine. Residues 385-388 (GETT) constitute a propeptide, removed by sortase.

Belongs to the M protein family.

It is found in the secreted. Its subcellular location is the cell wall. Its function is as follows. Binds to human plasminogen (and plasmin) via its kringle repeats. Also binds to albumin, immunoglobulin G and fibrinogen. Could provide the bacteria with a mechanism for invasion, as streptococcal-bound plasmin could permit tissue penetration. The chain is Plasminogen-binding group A streptococcal M-like protein PAM (pam) from Streptococcus pyogenes.